The chain runs to 99 residues: CLAVATA3/ESR (CLE)-related protein 11 (99 aa).

Residues 1–31 (MTKQPKPCSFLFHISLLSALFVFLLISFAFT) form the signal peptide. 2 positions are modified to hydroxyproline: proline 91 and proline 94. An O-linked (Ara...) hydroxyproline glycan is attached at proline 94.

Belongs to the CLV3/ESR signal peptide family. In terms of processing, the O-glycosylation (arabinosylation) of the hydroxyproline Pro-94 enhances binding affinity of the CLE11p peptide for its receptor. As to expression, mostly expressed in seedlings, roots and siliques, and, to a lower extent, in leaves, flowers, stems and apex.

It localises to the secreted. It is found in the extracellular space. Functionally, extracellular signal peptide that regulates cell fate. Represses root apical meristem maintenance. Regulates the transition of protophloem cells from proliferation to differentiation, thus impinging on postembryonic growth capacity of the root meristem; this signaling pathway requires CRN and CLV2. The protein is CLAVATA3/ESR (CLE)-related protein 11 of Arabidopsis thaliana (Mouse-ear cress).